Reading from the N-terminus, the 89-residue chain is Small ribosomal subunit protein bS20 (89 aa).

The protein belongs to the bacterial ribosomal protein bS20 family.

Binds directly to 16S ribosomal RNA. The chain is Small ribosomal subunit protein bS20 from Helicobacter pylori (strain ATCC 700392 / 26695) (Campylobacter pylori).